A 264-amino-acid chain; its full sequence is Thymidylate synthase (264 aa).

Residue arginine 21 coordinates dUMP. Histidine 51 is a (6R)-5,10-methylene-5,6,7,8-tetrahydrofolate binding site. Residue 126-127 (RR) coordinates dUMP. Cysteine 146 (nucleophile) is an active-site residue. DUMP-binding positions include 166–169 (RSCD), asparagine 177, and 207–209 (HLY). Aspartate 169 contributes to the (6R)-5,10-methylene-5,6,7,8-tetrahydrofolate binding site. Alanine 263 provides a ligand contact to (6R)-5,10-methylene-5,6,7,8-tetrahydrofolate.

Belongs to the thymidylate synthase family. Bacterial-type ThyA subfamily. In terms of assembly, homodimer.

Its subcellular location is the cytoplasm. It carries out the reaction dUMP + (6R)-5,10-methylene-5,6,7,8-tetrahydrofolate = 7,8-dihydrofolate + dTMP. Its pathway is pyrimidine metabolism; dTTP biosynthesis. Its function is as follows. Catalyzes the reductive methylation of 2'-deoxyuridine-5'-monophosphate (dUMP) to 2'-deoxythymidine-5'-monophosphate (dTMP) while utilizing 5,10-methylenetetrahydrofolate (mTHF) as the methyl donor and reductant in the reaction, yielding dihydrofolate (DHF) as a by-product. This enzymatic reaction provides an intracellular de novo source of dTMP, an essential precursor for DNA biosynthesis. This chain is Thymidylate synthase, found in Citrobacter koseri (strain ATCC BAA-895 / CDC 4225-83 / SGSC4696).